The chain runs to 338 residues: Ribosomal RNA small subunit methyltransferase H (338 aa).

Residues 53–55, D72, Y99, D123, and Q130 contribute to the S-adenosyl-L-methionine site; that span reads GGH. Disordered regions lie at residues 276–297 and 304–323; these read EITP…PGMG and TRGA…RSAP.

Belongs to the methyltransferase superfamily. RsmH family.

It is found in the cytoplasm. It catalyses the reaction cytidine(1402) in 16S rRNA + S-adenosyl-L-methionine = N(4)-methylcytidine(1402) in 16S rRNA + S-adenosyl-L-homocysteine + H(+). In terms of biological role, specifically methylates the N4 position of cytidine in position 1402 (C1402) of 16S rRNA. The chain is Ribosomal RNA small subunit methyltransferase H from Rhodococcus jostii (strain RHA1).